Here is a 406-residue protein sequence, read N- to C-terminus: Tryptophan 2,3-dioxygenase (406 aa).

Residues 72 to 76 and R144 each bind substrate; that span reads FIVTH. A heme-binding site is contributed by H328. Substrate is bound at residue T342.

This sequence belongs to the tryptophan 2,3-dioxygenase family. In terms of assembly, homotetramer. Dimer of dimers. Requires heme as cofactor.

It carries out the reaction L-tryptophan + O2 = N-formyl-L-kynurenine. Its pathway is amino-acid degradation; L-tryptophan degradation via kynurenine pathway; L-kynurenine from L-tryptophan: step 1/2. Its function is as follows. Heme-dependent dioxygenase that catalyzes the oxidative cleavage of the L-tryptophan (L-Trp) pyrrole ring and converts L-tryptophan to N-formyl-L-kynurenine. Catalyzes the oxidative cleavage of the indole moiety. This Xenopus laevis (African clawed frog) protein is Tryptophan 2,3-dioxygenase.